Here is a 37-residue protein sequence, read N- to C-terminus: Large ribosomal subunit protein bL36B (37 aa).

The protein belongs to the bacterial ribosomal protein bL36 family.

The sequence is that of Large ribosomal subunit protein bL36B from Saccharopolyspora erythraea (strain ATCC 11635 / DSM 40517 / JCM 4748 / NBRC 13426 / NCIMB 8594 / NRRL 2338).